Reading from the N-terminus, the 458-residue chain is Monomethylamine methyltransferase MtmB2 (458 aa).

A non-standard amino acid (pyrrolysine) is located at residue O202.

The protein belongs to the monomethylamine methyltransferase family. Can form a complex with MtmC.

It carries out the reaction Co(I)-[methylamine-specific corrinoid protein] + methylamine + H(+) = methyl-Co(III)-[methylamine-specific corrinoid protein] + NH4(+). It participates in one-carbon metabolism; methanogenesis from methylamine. Catalyzes the transfer of the methyl group from monomethylamine to the corrinoid cofactor of MtmC. In Methanosarcina acetivorans (strain ATCC 35395 / DSM 2834 / JCM 12185 / C2A), this protein is Monomethylamine methyltransferase MtmB2 (mtmB2).